A 170-amino-acid polypeptide reads, in one-letter code: NADH-quinone oxidoreductase subunit B (170 aa).

Cys42, Cys43, Cys107, and Cys136 together coordinate [4Fe-4S] cluster.

Belongs to the complex I 20 kDa subunit family. NDH-1 is composed of 14 different subunits. Subunits NuoB, C, D, E, F, and G constitute the peripheral sector of the complex. [4Fe-4S] cluster serves as cofactor.

The protein localises to the cell inner membrane. It carries out the reaction a quinone + NADH + 5 H(+)(in) = a quinol + NAD(+) + 4 H(+)(out). NDH-1 shuttles electrons from NADH, via FMN and iron-sulfur (Fe-S) centers, to quinones in the respiratory chain. The immediate electron acceptor for the enzyme in this species is believed to be ubiquinone. Couples the redox reaction to proton translocation (for every two electrons transferred, four hydrogen ions are translocated across the cytoplasmic membrane), and thus conserves the redox energy in a proton gradient. This chain is NADH-quinone oxidoreductase subunit B, found in Campylobacter concisus (strain 13826).